The chain runs to 185 residues: Prenylated Rab acceptor protein 1 (185 aa).

Residues 1-78 (MAVEKDQQKD…RNVEYYQSNY (78 aa)) lie on the Cytoplasmic side of the membrane. A required for interaction with prenylated RAB3A and VAMP2 region spans residues 30-54 (AGREWLERRRATIRSWGSFVDQRRF). The next 2 membrane-spanning stretches (helical) occupy residues 79–94 (VFVF…ATSP) and 95–112 (MLLV…ILYL). The Cytoplasmic portion of the chain corresponds to 113-131 (RTLQSKFVLFGREVSPAHQ). The next 2 helical transmembrane spans lie at 132–148 (YALA…LAGA) and 149–165 (GSAV…VIGS). Positions 165 to 185 (SHAAFHQIEAVDGEELQMEPV) are required for interaction with GDI1. Residues 166–185 (HAAFHQIEAVDGEELQMEPV) are Cytoplasmic-facing. The required for interaction with prenylated RAB3A and VAMP2 stretch occupies residues 175 to 185 (VDGEELQMEPV). Positions 175-185 (VDGEELQMEPV) are homodimerization.

The protein belongs to the PRA1 family. In terms of assembly, homodimer. Interacts with VAMP2 (synaptobrevin-2), prenylated Rab proteins, GDI1, NDRG1 and PCLO.

It is found in the cell membrane. The protein localises to the cytoplasm. Its subcellular location is the golgi apparatus. It localises to the cytoplasmic vesicle. The protein resides in the secretory vesicle. It is found in the synaptic vesicle. Its function is as follows. General Rab protein regulator required for vesicle formation from the Golgi complex. May control vesicle docking and fusion by mediating the action of Rab GTPases to the SNARE complexes. In addition it inhibits the removal of Rab GTPases from the membrane by GDI1. This is Prenylated Rab acceptor protein 1 (RABAC1) from Bos taurus (Bovine).